The primary structure comprises 31 residues: Glucagon-3 (31 aa).

Belongs to the glucagon family.

The protein localises to the secreted. In terms of biological role, glucagon plays a key role in glucose metabolism and homeostasis. Regulates blood glucose by increasing gluconeogenesis and decreasing glycolysis. The chain is Glucagon-3 from Huso dauricus (Kaluga sturgeon).